Here is a 335-residue protein sequence, read N- to C-terminus: Methionine import ATP-binding protein MetN 2 (335 aa).

The region spanning Ile2–Val242 is the ABC transporter domain. Gly38 to Ser45 lines the ATP pocket.

It belongs to the ABC transporter superfamily. Methionine importer (TC 3.A.1.24) family. In terms of assembly, the complex is composed of two ATP-binding proteins (MetN), two transmembrane proteins (MetI) and a solute-binding protein (MetQ).

Its subcellular location is the cell inner membrane. The enzyme catalyses L-methionine(out) + ATP + H2O = L-methionine(in) + ADP + phosphate + H(+). The catalysed reaction is D-methionine(out) + ATP + H2O = D-methionine(in) + ADP + phosphate + H(+). In terms of biological role, part of the ABC transporter complex MetNIQ involved in methionine import. Responsible for energy coupling to the transport system. This is Methionine import ATP-binding protein MetN 2 from Pseudomonas syringae pv. tomato (strain ATCC BAA-871 / DC3000).